The sequence spans 357 residues: Chorismate synthase (357 aa).

Residues 38 to 49 (EKDIQPDLDRRK) show a composition bias toward basic and acidic residues. Residues 38 to 60 (EKDIQPDLDRRKPGTSRYTTPRR) are disordered. NADP(+) contacts are provided by Arg48 and Arg54. FMN-binding positions include 125–127 (RSS), 243–244 (NA), Gly283, 298–302 (KPTSS), and Arg324.

It belongs to the chorismate synthase family. Homotetramer. It depends on FMNH2 as a cofactor.

The enzyme catalyses 5-O-(1-carboxyvinyl)-3-phosphoshikimate = chorismate + phosphate. The protein operates within metabolic intermediate biosynthesis; chorismate biosynthesis; chorismate from D-erythrose 4-phosphate and phosphoenolpyruvate: step 7/7. In terms of biological role, catalyzes the anti-1,4-elimination of the C-3 phosphate and the C-6 proR hydrogen from 5-enolpyruvylshikimate-3-phosphate (EPSP) to yield chorismate, which is the branch point compound that serves as the starting substrate for the three terminal pathways of aromatic amino acid biosynthesis. This reaction introduces a second double bond into the aromatic ring system. This Haemophilus influenzae (strain PittGG) protein is Chorismate synthase.